An 852-amino-acid polypeptide reads, in one-letter code: DNA repair protein rhp54 (852 aa).

2 short sequence motifs (nuclear localization signal) span residues 35 to 51 and 178 to 181; these read KKFK…RKEL and KRKK. The span at 187 to 205 shows a compositional bias: basic and acidic residues; that stretch reads NRKGKKEISDSEPESDHDS. The tract at residues 187 to 208 is disordered; sequence NRKGKKEISDSEPESDHDSCVS. The 179-residue stretch at 281–459 folds into the Helicase ATP-binding domain; sequence GRIDRCANGC…FSLLNFANPG (179 aa). 294–301 is an ATP binding site; the sequence is DEMGLGKT. Residues 410-413 carry the DEGH box motif; it reads DEGH. The Helicase C-terminal domain occupies 614–767; that stretch reads VLERMLYQIK…CVVDEAQDVE (154 aa).

It belongs to the SNF2/RAD54 helicase family. In terms of assembly, homohexamer. Interacts with rhp51.

It is found in the nucleus. It catalyses the reaction ATP + H2O = ADP + phosphate + H(+). Its function is as follows. Plays an essential role in homologous recombination (HR) which is a major pathway for repairing DNA double-strand breaks (DSBs), single-stranded DNA (ssDNA) gaps, and stalled or collapsed replication forks. Acts as a molecular motor during the homology search and guides RAD51 ssDNA along a donor dsDNA thereby changing the homology search from the diffusion-based mechanism to a motor-guided mechanism. Plays also an essential role in RAD51-mediated synaptic complex formation which consists of three strands encased in a protein filament formed once homology is recognized. Once DNA strand exchange occured, dissociates RAD51 from nucleoprotein filaments formed on dsDNA. This Schizosaccharomyces pombe (strain 972 / ATCC 24843) (Fission yeast) protein is DNA repair protein rhp54 (rhp54).